A 501-amino-acid polypeptide reads, in one-letter code: Probable cytosol aminopeptidase (501 aa).

Positions 268 and 273 each coordinate Mn(2+). The active site involves Lys-280. Residues Asp-291, Asp-350, and Glu-352 each contribute to the Mn(2+) site. Arg-354 is a catalytic residue.

Belongs to the peptidase M17 family. The cofactor is Mn(2+).

It is found in the cytoplasm. It catalyses the reaction Release of an N-terminal amino acid, Xaa-|-Yaa-, in which Xaa is preferably Leu, but may be other amino acids including Pro although not Arg or Lys, and Yaa may be Pro. Amino acid amides and methyl esters are also readily hydrolyzed, but rates on arylamides are exceedingly low.. The catalysed reaction is Release of an N-terminal amino acid, preferentially leucine, but not glutamic or aspartic acids.. Its function is as follows. Presumably involved in the processing and regular turnover of intracellular proteins. Catalyzes the removal of unsubstituted N-terminal amino acids from various peptides. This chain is Probable cytosol aminopeptidase, found in Pseudoalteromonas atlantica (strain T6c / ATCC BAA-1087).